A 458-amino-acid chain; its full sequence is Peptidyl-prolyl cis-trans isomerase FKBP4 (458 aa).

Position 1 is an N-acetylmethionine; in peptidyl-prolyl cis-trans isomerase FKBP4; alternate (Met-1). The tract at residues 1-24 is disordered; sequence MTAEEMKAAENGAQSAPLPLEGVD. Thr-2 is subject to N-acetylthreonine; in peptidyl-prolyl cis-trans isomerase FKBP4, N-terminally processed; partial. A PPIase FKBP-type 1 domain is found at 50 to 138; sequence GDRVFVHYTG…VFEVELFEFK (89 aa). Thr-143 is modified (phosphothreonine; by CK2). The PPIase FKBP-type 2 domain occupies 167-253; sequence GAMVEVALEG…RYEVRLKSFE (87 aa). Tyr-220 is subject to Phosphotyrosine. The interval 267-400 is interaction with tubulin; sequence LEQSNIVKER…TQLAVCQQRT (134 aa). TPR repeat units lie at residues 270-303, 319-352, and 353-386; these read SNIV…LEYE, LASH…DSNN, and EKGL…YPSN. N6-acetyllysine is present on Lys-282. Arg-373 bears the Omega-N-methylarginine mark. The disordered stretch occupies residues 428–458; that stretch reads EVAAGDHPTDAEMKGERNNVAENQSRVETEA. The span at 434-458 shows a compositional bias: basic and acidic residues; that stretch reads HPTDAEMKGERNNVAENQSRVETEA. Thr-436 carries the post-translational modification Phosphothreonine. Lys-441 participates in a covalent cross-link: Glycyl lysine isopeptide (Lys-Gly) (interchain with G-Cter in SUMO1). A Phosphoserine modification is found at Ser-452.

As to quaternary structure, homodimer. Interacts with GLMN. Associates with HSP90AA1 and HSPA1A/HSPA1B in steroid hormone receptor complexes. Also interacts with peroxisomal phytanoyl-CoA alpha-hydroxylase (PHYH). Interacts with NR3C1 and dynein. Interacts with HSF1 in the HSP90 complex. Associates with tubulin. Interacts with MAPT/TAU. Interacts (via TPR domain) with S100A1, S100A2 and S100A6; the interaction is Ca(2+) dependent. Interaction with S100A1 and S100A2 (but not with S100A6) leads to inhibition of FKBP4-HSP90 interaction. Interacts with dynein; contributes to NR3C1 transport to the nucleus. Phosphorylation by CK2 results in loss of HSP90 binding activity.

It localises to the cytoplasm. Its subcellular location is the cytosol. It is found in the mitochondrion. The protein resides in the nucleus. The protein localises to the cytoskeleton. The catalysed reaction is [protein]-peptidylproline (omega=180) = [protein]-peptidylproline (omega=0). With respect to regulation, inhibited by FK506. Functionally, immunophilin protein with PPIase and co-chaperone activities. Component of steroid receptors heterocomplexes through interaction with heat-shock protein 90 (HSP90). May play a role in the intracellular trafficking of heterooligomeric forms of steroid hormone receptors between cytoplasm and nuclear compartments. The isomerase activity controls neuronal growth cones via regulation of TRPC1 channel opening. Also acts as a regulator of microtubule dynamics by inhibiting MAPT/TAU ability to promote microtubule assembly. May have a protective role against oxidative stress in mitochondria. The polypeptide is Peptidyl-prolyl cis-trans isomerase FKBP4 (Fkbp4) (Mus musculus (Mouse)).